The primary structure comprises 753 residues: 5-methyltetrahydropteroyltriglutamate--homocysteine methyltransferase (753 aa).

Residues 17-20 (RELK) and K117 each bind 5-methyltetrahydropteroyltri-L-glutamate. L-homocysteine-binding positions include 431–433 (IGS) and E484. L-methionine-binding positions include 431 to 433 (IGS) and E484. Residues 515–516 (RC) and W561 contribute to the 5-methyltetrahydropteroyltri-L-glutamate site. Residue D599 coordinates L-homocysteine. D599 contributes to the L-methionine binding site. E605 is a binding site for 5-methyltetrahydropteroyltri-L-glutamate. 3 residues coordinate Zn(2+): H641, C643, and E665. H694 serves as the catalytic Proton donor. C726 contributes to the Zn(2+) binding site.

This sequence belongs to the vitamin-B12 independent methionine synthase family. The cofactor is Zn(2+).

The catalysed reaction is 5-methyltetrahydropteroyltri-L-glutamate + L-homocysteine = tetrahydropteroyltri-L-glutamate + L-methionine. Its pathway is amino-acid biosynthesis; L-methionine biosynthesis via de novo pathway; L-methionine from L-homocysteine (MetE route): step 1/1. In terms of biological role, catalyzes the transfer of a methyl group from 5-methyltetrahydrofolate to homocysteine resulting in methionine formation. The chain is 5-methyltetrahydropteroyltriglutamate--homocysteine methyltransferase from Escherichia coli O139:H28 (strain E24377A / ETEC).